The following is a 102-amino-acid chain: Small ribosomal subunit protein uS10 (102 aa).

It belongs to the universal ribosomal protein uS10 family. In terms of assembly, part of the 30S ribosomal subunit.

In terms of biological role, involved in the binding of tRNA to the ribosomes. The chain is Small ribosomal subunit protein uS10 from Thermotoga neapolitana (strain ATCC 49049 / DSM 4359 / NBRC 107923 / NS-E).